A 290-amino-acid polypeptide reads, in one-letter code: 4-diphosphocytidyl-2-C-methyl-D-erythritol kinase (290 aa).

K10 is a catalytic residue. P95–S105 provides a ligand contact to ATP. The active site involves D137.

This sequence belongs to the GHMP kinase family. IspE subfamily.

The catalysed reaction is 4-CDP-2-C-methyl-D-erythritol + ATP = 4-CDP-2-C-methyl-D-erythritol 2-phosphate + ADP + H(+). Its pathway is isoprenoid biosynthesis; isopentenyl diphosphate biosynthesis via DXP pathway; isopentenyl diphosphate from 1-deoxy-D-xylulose 5-phosphate: step 3/6. In terms of biological role, catalyzes the phosphorylation of the position 2 hydroxy group of 4-diphosphocytidyl-2C-methyl-D-erythritol. This chain is 4-diphosphocytidyl-2-C-methyl-D-erythritol kinase, found in Geobacillus thermodenitrificans (strain NG80-2).